The following is a 229-amino-acid chain: Cytidylate kinase (229 aa).

12–20 contacts ATP; it reads GPSGTGKSS.

Belongs to the cytidylate kinase family. Type 1 subfamily.

It localises to the cytoplasm. The enzyme catalyses CMP + ATP = CDP + ADP. It catalyses the reaction dCMP + ATP = dCDP + ADP. This is Cytidylate kinase from Rhodococcus jostii (strain RHA1).